The sequence spans 892 residues: Transmembrane channel-like protein 2-B (892 aa).

The tract at residues 29-125 (GINQNLRREE…DESMSEGEMA (97 aa)) is disordered. 2 stretches are compositionally biased toward basic residues: residues 48 to 58 (RRAKKRRMNRR) and 66 to 77 (RSKKMRMRVRKN). The segment covering 103 to 112 (PSSCSSSSDN) has biased composition (low complexity). The next 9 membrane-spanning stretches (helical) occupy residues 235-255 (LVLFGFMFGLVVIPELLMGIP), 275-295 (FSVLFEFGGYCKYSILFYGFY), 308-328 (LPLSYLLVGVGIFGYSLMVVI), 403-423 (LANVLILCCLAGSGYLIYAVV), 444-464 (EVEIVMSLLGLVCPPLFEAIA), 482-502 (IFALFLGNLYTFLFALFDEVN), 616-636 (LIFNQGMIWMGAFYAPGLVGI), 671-691 (FYMGLLLLVLFLSLMPVIYSI), and 736-756 (GLIISVVLLMVWLAIYYLNAV). Basic and acidic residues predominate over residues 772-785 (QMQRDEEKNRRNNK). 2 disordered regions span residues 772 to 791 (QMQRDEEKNRRNNKDSTNQV) and 796 to 892 (EDLL…PPRR). A compositionally biased stretch (pro residues) spans 862–878 (PRQPGPLPGNPRGPPPG).

This sequence belongs to the TMC family. As to expression, in adults, expression is restricted to the hair cells of inner ear and lateral line organ. Expressed at higher levels in the larval lateral-line neuromasts than in the larval inner ear.

The protein resides in the membrane. Probable component of the mechanotransducer (MET) non-selective cation channel. The sequence is that of Transmembrane channel-like protein 2-B from Danio rerio (Zebrafish).